The primary structure comprises 540 residues: Na(+)/H(+) antiporter NhaS2 (540 aa).

10 helical membrane-spanning segments follow: residues 29 to 49 (ITTLVENLIILLLVATLVALV), 71 to 91 (GLSVGLNPELILNFFLPILIF), 117 to 137 (VVISAAITAVLLKIGLGLAWV), 138 to 158 (TAAGVSVILTITDTVSVIAAF), 207 to 227 (IFVAFVGGGLVGLGLGYLCVG), 256 to 276 (LGVSSAIAVVVAGLVIGNLAL), 296 to 316 (FGVNTLIFLLVGIEVYPSILL), 323 to 343 (LIAIVAYQIGRVFSIYPLLYL), 358 to 378 (VLIAGNVKGSLSMALALALPL), and 389 to 409 (LVFSTVMVSLIGQGLSLPWVV).

It belongs to the monovalent cation:proton antiporter 1 (CPA1) transporter (TC 2.A.36) family.

The protein resides in the cell membrane. In terms of biological role, required for Na(+) uptake into the cell, especially at low external Na(+) concentrations or low Na(+)/K(+) ratios. May be part of a sodium cycle that permits re-entry of sodium into the cell. This chain is Na(+)/H(+) antiporter NhaS2 (nhaS2), found in Synechocystis sp. (strain ATCC 27184 / PCC 6803 / Kazusa).